The sequence spans 465 residues: Soluble pyridine nucleotide transhydrogenase (465 aa).

An FAD-binding site is contributed by 36 to 45 (ERYDNVGGGC).

It belongs to the class-I pyridine nucleotide-disulfide oxidoreductase family. The cofactor is FAD.

It is found in the cytoplasm. It catalyses the reaction NAD(+) + NADPH = NADH + NADP(+). Its function is as follows. Conversion of NADPH, generated by peripheral catabolic pathways, to NADH, which can enter the respiratory chain for energy generation. This chain is Soluble pyridine nucleotide transhydrogenase, found in Sodalis glossinidius (strain morsitans).